We begin with the raw amino-acid sequence, 218 residues long: Eukaryotic translation initiation factor 4E-1 (218 aa).

A disordered region spans residues 1–39; the sequence is MAEETDTRPASAGSRGRPAPEDDDREEGEITDLACAPSP. Residues 21-30 are compositionally biased toward acidic residues; it reads EDDDREEGEI. EIF4G-binding stretches follow at residues 43–46 and 53–89; these read HPLE and FDNP…NNIN. Residues 61-66, lysine 93, and 111-112 contribute to the mRNA site; these read KQAAWG and WE. A disulfide bridge connects residues cysteine 116 and cysteine 154. The EIF4G-binding stretch occupies residues 137–146; that stretch reads HTLLAMIGEQ. MRNA contacts are provided by residues 161–166 and 206–210; these read RGKQER and KKMDK.

This sequence belongs to the eukaryotic initiation factor 4E family. As to quaternary structure, EIF4F is a multi-subunit complex, the composition of which varies with external and internal environmental conditions. It is composed of at least EIF4A, EIF4E and EIF4G. EIF4E is also known to interact with other partners. In higher plants two isoforms of EIF4F have been identified, named isoform EIF4F and isoform EIF(iso)4F. Isoform EIF4F has subunits p220 and p26, whereas isoform EIF(iso)4F has subunits p82 and p28. According to the redox status, the Cys-116-Cys-154 disulfide bridge may have a role in regulating protein function by affecting its ability to bind capped mRNA. Post-translationally, phosphorylated upon oxygen deprivation.

It localises to the nucleus. The protein localises to the cytoplasm. Its function is as follows. Component of the protein complex eIF4F, which is involved in the recognition of the mRNA cap, ATP-dependent unwinding of 5'-terminal secondary structure and recruitment of mRNA to the ribosome. Recognizes and binds the 7-methylguanosine-containing mRNA cap during an early step in the initiation of protein synthesis and facilitates ribosome binding by inducing the unwinding of the mRNAs secondary structures. The polypeptide is Eukaryotic translation initiation factor 4E-1 (Zea mays (Maize)).